A 92-amino-acid polypeptide reads, in one-letter code: VDCGQVNSSLASCIPFLTGGVASPSASCCAGVQNLKTLAPTSADRRAACECIKAAAARFPTIKQDAASSLPKKCGVDINIPISKTTNCQAIN.

4 disulfides stabilise this stretch: Cys3–Cys51, Cys13–Cys28, Cys29–Cys74, and Cys49–Cys88.

Belongs to the plant LTP family.

Functionally, plant non-specific lipid-transfer proteins transfer phospholipids as well as galactolipids across membranes. May play a role in wax or cutin deposition in the cell walls of expanding epidermal cells and certain secretory tissues. This is Non-specific lipid-transfer protein A from Ricinus communis (Castor bean).